Here is a 146-residue protein sequence, read N- to C-terminus: Large ribosomal subunit protein bL21 (146 aa).

Residues 115-146 (KSISLGKSAPKSSAKKETVKKETKPKSEKSTN) form a disordered region. A compositionally biased stretch (basic and acidic residues) spans 128 to 146 (AKKETVKKETKPKSEKSTN).

This sequence belongs to the bacterial ribosomal protein bL21 family. Part of the 50S ribosomal subunit. Contacts protein L20.

Its function is as follows. This protein binds to 23S rRNA in the presence of protein L20. The chain is Large ribosomal subunit protein bL21 from Prochlorococcus marinus (strain MIT 9312).